Here is a 620-residue protein sequence, read N- to C-terminus: Nuclear cap-binding protein subunit 3 (620 aa).

Residue lysine 12 forms a Glycyl lysine isopeptide (Lys-Gly) (interchain with G-Cter in SUMO2) linkage. The span at 15–28 (APAGPALGLPSPEA) shows a compositional bias: low complexity. A disordered region spans residues 15–42 (APAGPALGLPSPEAESGVDRGEPEPMEV). Serine 25 carries the phosphoserine modification. Residue lysine 70 forms a Glycyl lysine isopeptide (Lys-Gly) (interchain with G-Cter in SUMO2) linkage. Phosphoserine is present on serine 73. The RNA recognition motif (RRM) domain stretch occupies residues 126-187 (ETIYICGVDE…MSSLPAQDKI (62 aa)). Residues 155–158 (WLDD) carry the WLDD motif; essential for 7-methylguanosine-containing mRNA cap binding motif. Over residues 185–198 (DKIRSRDASEDKSA) the composition is skewed to basic and acidic residues. Disordered stretches follow at residues 185 to 233 (DKIR…LDTL), 332 to 419 (HSGL…PKKS), and 436 to 620 (IRNS…EAES). Lysine 186 is covalently cross-linked (Glycyl lysine isopeptide (Lys-Gly) (interchain with G-Cter in SUMO2)). Phosphoserine occurs at positions 209 and 210. Composition is skewed to acidic residues over residues 209–230 (SSDD…DVEL) and 341–365 (EPIE…DMDA). Basic and acidic residues predominate over residues 366–388 (DDRVVVEYHEELPALKQPRERSA). At threonine 413 the chain carries Phosphothreonine. Serine 415 is subject to Phosphoserine. 2 stretches are compositionally biased toward basic and acidic residues: residues 459–474 (PPEK…DEKR) and 511–521 (VRREPSSDVHS). Residue lysine 541 forms a Glycyl lysine isopeptide (Lys-Gly) (interchain with G-Cter in SUMO2) linkage. 2 stretches are compositionally biased toward basic and acidic residues: residues 554–569 (KTKE…RAPG) and 585–598 (IKEK…KSRL). The span at 611 to 620 (ESSSGSEAES) shows a compositional bias: low complexity. Position 620 is a phosphoserine (serine 620).

Belongs to the NCBP3 family. As to quaternary structure, component of an alternative cap-binding complex (CBC) composed of NCBP1/CBP80 and NCBP3. Interacts with SRRT, KPNA3, THOC5 and EIF4A3.

It is found in the nucleus. Its subcellular location is the cytoplasm. Associates with NCBP1/CBP80 to form an alternative cap-binding complex (CBC) which plays a key role in mRNA export. NCBP3 serves as adapter protein linking the capped RNAs (m7GpppG-capped RNA) to NCBP1/CBP80. Unlike the conventional CBC with NCBP2 which binds both small nuclear RNA (snRNA) and messenger (mRNA) and is involved in their export from the nucleus, the alternative CBC with NCBP3 does not bind snRNA and associates only with mRNA thereby playing a role in only mRNA export. The alternative CBC is particularly important in cellular stress situations such as virus infections and the NCBP3 activity is critical to inhibit virus growth. This Homo sapiens (Human) protein is Nuclear cap-binding protein subunit 3.